The following is a 166-amino-acid chain: Large ribosomal subunit protein uL10 (166 aa).

It belongs to the universal ribosomal protein uL10 family. Part of the ribosomal stalk of the 50S ribosomal subunit. The N-terminus interacts with L11 and the large rRNA to form the base of the stalk. The C-terminus forms an elongated spine to which L12 dimers bind in a sequential fashion forming a multimeric L10(L12)X complex.

Functionally, forms part of the ribosomal stalk, playing a central role in the interaction of the ribosome with GTP-bound translation factors. The chain is Large ribosomal subunit protein uL10 from Flavobacterium psychrophilum (strain ATCC 49511 / DSM 21280 / CIP 103535 / JIP02/86).